Here is a 773-residue protein sequence, read N- to C-terminus: Elongin-A (773 aa).

Residues 4–79 (ESALQVVEKL…AQWKKLVPVE (76 aa)) form the TFIIS N-terminal domain. The segment covering 79–93 (ERNNEAEDQDFEKSN) has biased composition (basic and acidic residues). Residues 79–480 (ERNNEAEDQD…PRKVPTDVLP (402 aa)) are disordered. The span at 112-124 (YQESWQASGSQPY) shows a compositional bias: polar residues. Positions 136 to 156 (LPELERPHKVAHGHERRDERK) are enriched in basic and acidic residues. A compositionally biased stretch (low complexity) spans 162–174 (SPPYSSDPESSDY). Serine 195 bears the Phosphoserine mark. Basic residues predominate over residues 239-248 (KPHKSSHKEK). 2 stretches are compositionally biased toward basic and acidic residues: residues 249–265 (RPVDARGDEKSSVMGRE) and 271–304 (SSKEESRRLLSEDSAKEKLPSSVVKKEKDREGNS). The residue at position 310 (serine 310) is a Phosphoserine. Basic and acidic residues-rich tracts occupy residues 317-339 (SDNHFKKPKHKDSEKIKSDKNKQ) and 368-380 (QEGKVRTNSDRKS). Serine 380 and serine 383 each carry phosphoserine. Lysine 430 carries the N6-acetyllysine modification. A Phosphoserine modification is found at serine 515. Residues 521 to 680 (EAGFTGRRMN…PPRDVRRRQE (160 aa)) are activation domain. A BC-box region spans residues 549-558 (TLHQQCIRVL). Residues 565–609 (IFEVGGVPYSVLEPVLERCTPDQLYRIEECNHVLIEETDQLWKVH) form the F-box domain. Residues 671-747 (PPRDVRRRQE…VASSSVSYDP (77 aa)) form a disordered region. Residues 704–718 (SSHVPASNSSSSFHS) are compositionally biased toward low complexity. Residues 728 to 744 (PSTSSAHLAPVASSSVS) show a composition bias toward polar residues.

As to quaternary structure, heterotrimer of an A (ELOA, ELOA2 or ELOA3P), ELOB and ELOC subunit. Part of a multisubunit ubiquitin ligase complex consisting of elongin BC complex (ELOB and ELOC), elongin A/ELOA, RBX1 and CUL5. Interacts with ERCC6; the interaction is induced by DNA damaging agents or inhibitors of RNA polymerase II elongation. Interacts (via BC-box) with CUL5.

It is found in the nucleus. In terms of biological role, SIII, also known as elongin, is a general transcription elongation factor that increases the RNA polymerase II transcription elongation past template-encoded arresting sites. Subunit A is transcriptionally active and its transcription activity is strongly enhanced by binding to the dimeric complex of the SIII regulatory subunits B and C (elongin BC complex). Its function is as follows. As part of a multisubunit complex composed of elongin BC complex (ELOB and ELOC), elongin A/ELOA, RBX1 and CUL5; polyubiquitinates monoubiquitinated POLR2A. The sequence is that of Elongin-A (Eloa) from Rattus norvegicus (Rat).